The following is a 490-amino-acid chain: MINASLTELRAALDARKISSVELATLFLDRIERLDASLNAFITVDRDGALEAARAADARIAAGDAGPLTGIPLAHKDVFCTEGVLTTCGSKMLANFVSPYDAHVVSLLKTAGAVSLGKTNMDEFAMGSSNENSHFGPAKNPWDTTRIPGGSSGGSAAAVAARLVPIATGTDTGGSVRQPAALTGVTGIKPTYGVVSRYGMIAYASSLDQGGAFGASAADCAQLLTAMAGFDPRDSTSLERPAEDYSRELAAPAAARPLAGLRIGLPKEFFGAGMADDVRAAVEAALDGYRALGATTVDVSLPNAQLAIPAYYVIAPAEASSNLSRFDGVRYGHRAAEYRDLAEMYSKSRAEGFGAEVKRRILVGTYVLSHGYYDAYYLQAQKLRRLIAQDFQAALAGCDVIAGPTSPTTAWTIGEKSDDPVQMYLSDIYTIAVNLAGLPGLSHPCGFGAGELPVGLQLVGDYFSEARLLNAAHRFQQASDWHLRRPAIAA.

Residues Lys76 and Ser151 each act as charge relay system in the active site. The active-site Acyl-ester intermediate is Ser175.

Belongs to the amidase family. GatA subfamily. Heterotrimer of A, B and C subunits.

It catalyses the reaction L-glutamyl-tRNA(Gln) + L-glutamine + ATP + H2O = L-glutaminyl-tRNA(Gln) + L-glutamate + ADP + phosphate + H(+). Its function is as follows. Allows the formation of correctly charged Gln-tRNA(Gln) through the transamidation of misacylated Glu-tRNA(Gln) in organisms which lack glutaminyl-tRNA synthetase. The reaction takes place in the presence of glutamine and ATP through an activated gamma-phospho-Glu-tRNA(Gln). This Aromatoleum aromaticum (strain DSM 19018 / LMG 30748 / EbN1) (Azoarcus sp. (strain EbN1)) protein is Glutamyl-tRNA(Gln) amidotransferase subunit A.